A 130-amino-acid polypeptide reads, in one-letter code: Small ribosomal subunit protein uS9 (130 aa).

Belongs to the universal ribosomal protein uS9 family.

In Onion yellows phytoplasma (strain OY-M), this protein is Small ribosomal subunit protein uS9.